Reading from the N-terminus, the 658-residue chain is Structure-specific endonuclease subunit SLX4 (658 aa).

Disordered stretches follow at residues 17–37 (VDSD…IPGD), 74–123 (GATE…KSIT), and 327–383 (QPGV…QVLQ). 2 stretches are compositionally biased toward low complexity: residues 75-90 (ATES…PPAK) and 99-108 (KAAGRTSTGT). A compositionally biased stretch (polar residues) spans 365–374 (FPKSPTSTPE).

This sequence belongs to the SLX4 family. In terms of assembly, forms a heterodimer with SLX1. Post-translationally, phosphorylated in response to DNA damage.

It is found in the nucleus. Functionally, regulatory subunit of the SLX1-SLX4 structure-specific endonuclease that resolves DNA secondary structures generated during DNA repair and recombination. Has endonuclease activity towards branched DNA substrates, introducing single-strand cuts in duplex DNA close to junctions with ss-DNA. The chain is Structure-specific endonuclease subunit SLX4 from Lachancea thermotolerans (strain ATCC 56472 / CBS 6340 / NRRL Y-8284) (Yeast).